Reading from the N-terminus, the 84-residue chain is U2-theraphotoxin-Cg1b 2 (84 aa).

The N-terminal stretch at 1–21 (MKVSVLITLAVLGVMFLLTSA) is a signal peptide. A propeptide spanning residues 22-48 (EERGSDQMDSPAWLKSMEIIFQSEERE) is cleaved from the precursor. Cystine bridges form between Cys49-Cys63, Cys56-Cys68, and Cys62-Cys76.

It belongs to the neurotoxin 10 (Hwtx-1) family. 06 (F4b) subfamily. Expressed by the venom gland.

Its subcellular location is the secreted. Functionally, probable ion channel inhibitor. The polypeptide is U2-theraphotoxin-Cg1b 2 (Chilobrachys guangxiensis (Chinese earth tiger tarantula)).